The sequence spans 188 residues: PRA1 family protein F4 (188 aa).

A compositionally biased stretch (polar residues) spans Met-1–Ala-13. The segment at Met-1–Ala-25 is disordered. The next 4 helical transmembrane spans lie at Tyr-67–Trp-86, Ser-90–Leu-107, Ile-119–Thr-139, and Thr-142–Ile-162.

It belongs to the PRA1 family.

It localises to the endosome membrane. May be involved in both secretory and endocytic intracellular trafficking in the endosomal/prevacuolar compartments. The sequence is that of PRA1 family protein F4 (PRA1F4) from Arabidopsis thaliana (Mouse-ear cress).